The sequence spans 362 residues: Malate dehydrogenase (362 aa).

It belongs to the LDH2/MDH2 oxidoreductase family. As to quaternary structure, homodimer.

The protein localises to the cytoplasm. The enzyme catalyses (S)-malate + NAD(+) = oxaloacetate + NADH + H(+). In Pyrococcus abyssi (strain GE5 / Orsay), this protein is Malate dehydrogenase (mdh).